A 157-amino-acid chain; its full sequence is MSRNTEELQGISLLGNQKTRYPTGYAPEILEAFDNKHPDNDYFVKFVCPEFTSLCPMTGQPDFATIYIRYIPHIKMVESKSLKLYLFSFRNHGDFHEDCVNIIMKDLIALMDPKYIEVFGEFTPRGGIAIHPFANYGKAGTEFEALARKRLFEHDAQ.

Residue C55 is the Thioimide intermediate of the active site. D62 functions as the Proton donor in the catalytic mechanism. Residues 77–79 (VES) and 96–97 (HE) contribute to the substrate site.

Belongs to the GTP cyclohydrolase I family. QueF type 1 subfamily.

Its subcellular location is the cytoplasm. It carries out the reaction 7-aminomethyl-7-carbaguanine + 2 NADP(+) = 7-cyano-7-deazaguanine + 2 NADPH + 3 H(+). Its pathway is tRNA modification; tRNA-queuosine biosynthesis. Catalyzes the NADPH-dependent reduction of 7-cyano-7-deazaguanine (preQ0) to 7-aminomethyl-7-deazaguanine (preQ1). The sequence is that of NADPH-dependent 7-cyano-7-deazaguanine reductase from Neisseria meningitidis serogroup A / serotype 4A (strain DSM 15465 / Z2491).